A 449-amino-acid chain; its full sequence is Tubulin alpha-2 chain (449 aa).

Positions 11, 71, 140, 144, 145, 179, 206, and 228 each coordinate GTP. Glu-71 contacts Mg(2+). Residue Glu-254 is part of the active site.

It belongs to the tubulin family. In terms of assembly, dimer of alpha and beta chains. A typical microtubule is a hollow water-filled tube with an outer diameter of 25 nm and an inner diameter of 15 nM. Alpha-beta heterodimers associate head-to-tail to form protofilaments running lengthwise along the microtubule wall with the beta-tubulin subunit facing the microtubule plus end conferring a structural polarity. Microtubules usually have 13 protofilaments but different protofilament numbers can be found in some organisms and specialized cells. The cofactor is Mg(2+).

It is found in the cytoplasm. Its subcellular location is the cytoskeleton. It carries out the reaction GTP + H2O = GDP + phosphate + H(+). Functionally, tubulin is the major constituent of microtubules, a cylinder consisting of laterally associated linear protofilaments composed of alpha- and beta-tubulin heterodimers. Microtubules grow by the addition of GTP-tubulin dimers to the microtubule end, where a stabilizing cap forms. Below the cap, tubulin dimers are in GDP-bound state, owing to GTPase activity of alpha-tubulin. This Schizosaccharomyces pombe (strain 972 / ATCC 24843) (Fission yeast) protein is Tubulin alpha-2 chain (tub1).